The sequence spans 202 residues: Coiled-coil domain-containing protein 85B (202 aa).

Methionine 1 is subject to N-acetylmethionine. 2 coiled-coil regions span residues 44–82 and 118–141; these read RLMQ…DLCC and QKLA…KELC. A compositionally biased stretch (gly residues) spans 152–162; sequence GGPGGAVGSGA. The disordered stretch occupies residues 152–202; that stretch reads GGPGGAVGSGAGPTPELALPPCGPRDLGDGSSSTGSVGSPDQLPLACSPDD. The span at 180 to 190 shows a compositional bias: low complexity; that stretch reads DGSSSTGSVGS.

This sequence belongs to the CCDC85 family. As to quaternary structure, interacts with CEBPB. May interact with CEBPD. Interacts with EURL. Interacts with MCRS1. Interacts with TCF7L2; competes with CTNNB1. Interacts with ANKRD26. Interacts with the beta-catenin family proteins ARVCF, CTNND1, CTNND2 and PKP4. In terms of tissue distribution, expressed in white and brown adipose tissue.

It localises to the nucleus. The protein localises to the cytoplasm. The protein resides in the cytoskeleton. Its subcellular location is the microtubule organizing center. It is found in the centrosome. It localises to the cell junction. The protein localises to the adherens junction. Functions as a transcriptional repressor. May inhibit the activity of CTNNB1 in a TP53-dependent manner and thus regulate cell growth. May function in adipocyte differentiation, negatively regulating mitotic clonal expansion. Plays a role in cell-cell adhesion and epithelium development through its interaction with proteins of the beta-catenin family. The chain is Coiled-coil domain-containing protein 85B (Ccdc85b) from Mus musculus (Mouse).